Here is a 577-residue protein sequence, read N- to C-terminus: Cytochrome P450 714D1 (577 aa).

The Lumenal segment spans residues 1–3 (MES). Residues 4–24 (FFVFFTAAALPVVVAAAVIAG) traverse the membrane as a helical; Signal-anchor for type III membrane protein segment. The Cytoplasmic segment spans residues 25–577 (LCITAAWLAR…STAPVHSSHN (553 aa)). The interval 315–343 (REHGGKAAPPSPPERDFLGSIIENSGGQP) is disordered. Cys504 provides a ligand contact to heme.

The protein belongs to the cytochrome P450 family. It depends on heme as a cofactor. In terms of tissue distribution, expressed in rapidly elongating or dividing tissues, including the shoot apical meristem, the intercalary meristem and elongating zones of internodes, and panicle but not in young seedlings, roots and leaves. During the heading stage, the highest expression is detected in the flowering spikelets, anthers, the divisional zone and the node of the uppermost internode.

It localises to the endoplasmic reticulum membrane. Its function is as follows. Catalyzes the 16alpha,17-epoxidation on non-13-hydroxylated gibberellins (GAs), including GA4, GA9, and GA12. No activity with GA1, GA20, GA53 or ent-kaurenoic acid. Reduces the biological activity of GAs. In Oryza sativa subsp. japonica (Rice), this protein is Cytochrome P450 714D1 (CYP714D1).